The sequence spans 321 residues: Beta-ketoacyl-[acyl-carrier-protein] synthase III (321 aa).

Active-site residues include cysteine 113 and histidine 246. Positions 247 to 251 (QANVR) are ACP-binding. Residue asparagine 276 is part of the active site.

This sequence belongs to the thiolase-like superfamily. FabH family. Homodimer.

The protein localises to the cytoplasm. The catalysed reaction is malonyl-[ACP] + acetyl-CoA + H(+) = 3-oxobutanoyl-[ACP] + CO2 + CoA. It functions in the pathway lipid metabolism; fatty acid biosynthesis. Functionally, catalyzes the condensation reaction of fatty acid synthesis by the addition to an acyl acceptor of two carbons from malonyl-ACP. Catalyzes the first condensation reaction which initiates fatty acid synthesis and may therefore play a role in governing the total rate of fatty acid production. Possesses both acetoacetyl-ACP synthase and acetyl transacylase activities. Its substrate specificity determines the biosynthesis of branched-chain and/or straight-chain of fatty acids. In Enterococcus faecalis (strain ATCC 700802 / V583), this protein is Beta-ketoacyl-[acyl-carrier-protein] synthase III.